The chain runs to 477 residues: UDP-N-acetylmuramate--L-alanine ligase (477 aa).

An ATP-binding site is contributed by 112–118; it reads GTHGKTT.

It belongs to the MurCDEF family.

The protein localises to the cytoplasm. It carries out the reaction UDP-N-acetyl-alpha-D-muramate + L-alanine + ATP = UDP-N-acetyl-alpha-D-muramoyl-L-alanine + ADP + phosphate + H(+). The protein operates within cell wall biogenesis; peptidoglycan biosynthesis. Its function is as follows. Cell wall formation. The protein is UDP-N-acetylmuramate--L-alanine ligase of Verminephrobacter eiseniae (strain EF01-2).